A 470-amino-acid chain; its full sequence is Membrane-bound lytic murein transglycosylase F (470 aa).

A signal peptide spans 1–24; that stretch reads MPSLKTKGAAGKFASLLLVLALSA. A non-LT domain region spans residues 25-262; it reads CSRPAPPPET…RALERYFGHV (238 aa). The segment at 263–470 is LT domain; the sequence is KRLGSSDILG…RGEDGLPPPG (208 aa). Glu-309 is a catalytic residue.

It in the N-terminal section; belongs to the bacterial solute-binding protein 3 family. The protein in the C-terminal section; belongs to the transglycosylase Slt family.

The protein resides in the cell outer membrane. The enzyme catalyses Exolytic cleavage of the (1-&gt;4)-beta-glycosidic linkage between N-acetylmuramic acid (MurNAc) and N-acetylglucosamine (GlcNAc) residues in peptidoglycan, from either the reducing or the non-reducing ends of the peptidoglycan chains, with concomitant formation of a 1,6-anhydrobond in the MurNAc residue.. Murein-degrading enzyme that degrades murein glycan strands and insoluble, high-molecular weight murein sacculi, with the concomitant formation of a 1,6-anhydromuramoyl product. Lytic transglycosylases (LTs) play an integral role in the metabolism of the peptidoglycan (PG) sacculus. Their lytic action creates space within the PG sacculus to allow for its expansion as well as for the insertion of various structures such as secretion systems and flagella. The sequence is that of Membrane-bound lytic murein transglycosylase F from Thiobacillus denitrificans (strain ATCC 25259 / T1).